The sequence spans 863 residues: MLFPLSLSSPLTPSAVKIERENLKQFELENFSRYSIFELVENRSDFYDALLIQLWQEMGLSEQLGISLIAVGGYGRREMFPLSDLDFLILVEQTPIPEIEEKITQFIQFLWDCGFEVGHSVRTLQQCESEGKQDITIATNLLEARFLIGNRPHFDALNELVKRADFWSKEGFFNAKVQEQIERYQRYHNTAYNLEPDIKYSPGGLRDLHLLYWVALHHSGAQTLEDILQSGFIYPQEYQQLQESRAFLFKVRFALHLILTRYDNRLLFDRQIKVSELLGFRGEGNQAVEKMMKCFFQALHRISLISNLLIQHYRENVLSSNQATVIEQLDDDFQLINQCLCLRNSLVFQEKPARILDLFFYLTQYEQANIHSDTLRQLQISLEQLPQKLCEIPEAREKFLRLFNQPNSIKRAFMPMHQYGVLTAYLPQWQAIEGLMQFDLFHIYTVDEHTLRVMLKLESFLSQESAQEHPIAHRIFSQLSDRTLLYIAALFHDIAKGRGGDHAELGAKDVANFARLHGLDRREIDTLAWLVQSHLLMSITAQRRDIHDPEVVMNFAEAVQNQVRLDYLTCLTVADICATNGNLWNSWKRSLFASLYEFTEQQFAQGMKELLDYSEKSAENRKLAQQILTQDYSDIMPISIDQLWERCPEDYFVRNTPKQIAWHTSLLVDLVEALLVKISNRFSLGGTEVFIYCQDQPHLFNKVVSTIGAKKFSIHDAQIITTQDGYVFDSFIITELNGELVEFDRRRELEQALTLALQSEKLSALSITPNRQLQHFTVQTDVRFLHENKKEHTEMELVALDKAGLLAQVSQIFSELNLNLLNAKITTVGEKAEDFFILTNQFGQALDSQQREILRNVLYRNIG.

The segment at 1-328 is uridylyltransferase; sequence MLFPLSLSSP…SSNQATVIEQ (328 aa). The segment at 329–687 is uridylyl-removing; that stretch reads LDDDFQLINQ…ISNRFSLGGT (359 aa). Residues 446–568 form the HD domain; it reads VDEHTLRVML…VQNQVRLDYL (123 aa). ACT domains are found at residues 688–772 and 794–863; these read EVFI…PNRQ and EMEL…RNIG.

Belongs to the GlnD family. Requires Mg(2+) as cofactor.

The enzyme catalyses [protein-PII]-L-tyrosine + UTP = [protein-PII]-uridylyl-L-tyrosine + diphosphate. It catalyses the reaction [protein-PII]-uridylyl-L-tyrosine + H2O = [protein-PII]-L-tyrosine + UMP + H(+). Uridylyltransferase (UTase) activity is inhibited by glutamine, while glutamine activates uridylyl-removing (UR) activity. Its function is as follows. Modifies, by uridylylation and deuridylylation, the PII regulatory proteins (GlnB and homologs), in response to the nitrogen status of the cell that GlnD senses through the glutamine level. Under low glutamine levels, catalyzes the conversion of the PII proteins and UTP to PII-UMP and PPi, while under higher glutamine levels, GlnD hydrolyzes PII-UMP to PII and UMP (deuridylylation). Thus, controls uridylylation state and activity of the PII proteins, and plays an important role in the regulation of nitrogen assimilation and metabolism. The polypeptide is Bifunctional uridylyltransferase/uridylyl-removing enzyme (Haemophilus influenzae (strain PittEE)).